A 496-amino-acid chain; its full sequence is Chromosomal replication initiator protein DnaA (496 aa).

The tract at residues M1–Q76 is domain I, interacts with DnaA modulators. The interval Q76–S150 is domain II. Residues P151–Q373 are domain III, AAA+ region. Positions 197, 199, 200, and 201 each coordinate ATP. A domain IV, binds dsDNA region spans residues S374 to A496.

It belongs to the DnaA family. In terms of assembly, oligomerizes as a right-handed, spiral filament on DNA at oriC.

Its subcellular location is the cytoplasm. Plays an essential role in the initiation and regulation of chromosomal replication. ATP-DnaA binds to the origin of replication (oriC) to initiate formation of the DNA replication initiation complex once per cell cycle. Binds the DnaA box (a 9 base pair repeat at the origin) and separates the double-stranded (ds)DNA. Forms a right-handed helical filament on oriC DNA; dsDNA binds to the exterior of the filament while single-stranded (ss)DNA is stabiized in the filament's interior. The ATP-DnaA-oriC complex binds and stabilizes one strand of the AT-rich DNA unwinding element (DUE), permitting loading of DNA polymerase. After initiation quickly degrades to an ADP-DnaA complex that is not apt for DNA replication. Binds acidic phospholipids. The protein is Chromosomal replication initiator protein DnaA of Brucella abortus biovar 1 (strain 9-941).